A 336-amino-acid chain; its full sequence is Glycerol-3-phosphate dehydrogenase [NAD(P)+] (336 aa).

The NADPH site is built by Ser11, Trp12, and Lys106. The sn-glycerol 3-phosphate site is built by Lys106, Gly134, and Ser136. An NADPH-binding site is contributed by Ala138. Sn-glycerol 3-phosphate is bound by residues Lys189, Asp242, Ser252, Arg253, and Asn254. Lys189 serves as the catalytic Proton acceptor. An NADPH-binding site is contributed by Arg253. NADPH is bound by residues Val277 and Glu279.

The protein belongs to the NAD-dependent glycerol-3-phosphate dehydrogenase family.

The protein localises to the cytoplasm. The catalysed reaction is sn-glycerol 3-phosphate + NAD(+) = dihydroxyacetone phosphate + NADH + H(+). The enzyme catalyses sn-glycerol 3-phosphate + NADP(+) = dihydroxyacetone phosphate + NADPH + H(+). It functions in the pathway membrane lipid metabolism; glycerophospholipid metabolism. Functionally, catalyzes the reduction of the glycolytic intermediate dihydroxyacetone phosphate (DHAP) to sn-glycerol 3-phosphate (G3P), the key precursor for phospholipid synthesis. The sequence is that of Glycerol-3-phosphate dehydrogenase [NAD(P)+] from Agathobacter rectalis (strain ATCC 33656 / DSM 3377 / JCM 17463 / KCTC 5835 / VPI 0990) (Eubacterium rectale).